The primary structure comprises 376 residues: MKIVVDENMPHARELFAEFGEVIPLPGRQMLATDLQEADVLLVRSVTRVDAALLASCPRLSFVGTATIGTDHVDKGLLAERGIPFFSAPGCNKYSVGDYVLSALLVLAERHELNLGAMSLAVIGAGNTGECVAGKAEALGMRVLRCDPPRARAAEANEAAQFVDYQQALEADIVSFHVPITRQGPDATFHLLDAAQIAARPAGQILINASRGEVWDNQALLARQQSQAPLRLVMDVWEGEPEPLQALVPHTELATPHIAGYSLEGKARGTWMLYEALCRQLRRTPRQDLQSLLPIPEVREVTPGQSADQALIKQLVHLIYDVRRDDARFRNRLGVAGSFDEQRKHYPERRELSSLQLKGPFAGAALARLGFVCQPD.

2 residues coordinate substrate: Ser-45 and Thr-67. NAD(+) contacts are provided by residues Asp-147, 209–211 (ASR), and Asp-235. Residue Arg-211 is part of the active site. Glu-240 is a catalytic residue. His-257 (proton donor) is an active-site residue. Position 260 (Gly-260) interacts with NAD(+). Tyr-261 is a binding site for substrate.

Belongs to the D-isomer specific 2-hydroxyacid dehydrogenase family. PdxB subfamily. As to quaternary structure, homodimer.

The protein resides in the cytoplasm. The enzyme catalyses 4-phospho-D-erythronate + NAD(+) = (R)-3-hydroxy-2-oxo-4-phosphooxybutanoate + NADH + H(+). The protein operates within cofactor biosynthesis; pyridoxine 5'-phosphate biosynthesis; pyridoxine 5'-phosphate from D-erythrose 4-phosphate: step 2/5. Catalyzes the oxidation of erythronate-4-phosphate to 3-hydroxy-2-oxo-4-phosphonooxybutanoate. The chain is Erythronate-4-phosphate dehydrogenase from Aeromonas hydrophila subsp. hydrophila (strain ATCC 7966 / DSM 30187 / BCRC 13018 / CCUG 14551 / JCM 1027 / KCTC 2358 / NCIMB 9240 / NCTC 8049).